The sequence spans 1510 residues: MGGGRRGGRREAEEGVAVAGRSRGVAAAAARHEVAGELELASAGGLGGGGGDELVDPDQLTYIHNVFKIDLYSHVLVNLLVTICKDEKLQNILGHFQKEFEGGVSAENLGSQYGGYGSFLPTYQRSPPALSQSGSPAVLPNHGSASRSPYIPLESVQKNHFVKQAIDGRRKNNYCQRTSSENDSNHSQQLLNSGPEQKTAKIRIKVNNKCLERNNAAIYSGLGLDISPSSSIDDSPQWSIEAPESKLFPDESADTIFQIMTCHSVPGGLLLSPLAENVLELRQKSTAVTKKHEAPVYDNDKEELQRNCCHTSSAAPDNNYQLVKKIKLDEQRDHLPEFENSKYRHKNATIMKKGAKPELKDISDEIDSIRAPRCAKTEKHAVGESADFIADTSGRLKEAKNGQFKGKGSTQSSLSIIDVKAANSANDDKHPKGKAKLKVTLVRNAKMESSLDDGFSHKTKSDKCNDQPVTTSSQLQIDPAKKTSLKRDRGKVVCAKDEPSQYKSKELRSLVDAESMGTTTENVAGNSSELLKGKKVSALQASLFGKKLKIKTHKKPNYDTTRKPNGENEGYVLDHRNGSTYLHTEDKSLKTEKESATSGLTDKDFSGGGNDGDHKISPIVVDKSASMPSRCKNETTEASMAVPASEPVDQWVCCDKCETWRLLPYGMNSDTLPKKWRCSMQSWLPGMNNCKLSEGETTNAIRALYVVPIPENNISLDSRCDTATLVRSNDAAIMSDNLGMPEISKSSKKLHAPRNRDGLDCFPKLKEKQKRIESSDKGEKSTVTISSGQTMAKDRMHRKRKTSGADYDNLIASKKLKKVYNEPPKHQPPQFELSKSRPSTKGSLKELPKHTNISPGMGKHALPSSGKQFCDGDNSDRGARASDAGKSDPRDLFIKKNKSKQMQLRQHGPDPRPSDAFAKHVVKEVLSESNAAKEKLGSDLKFLKVDDHEKSAHARGPVTGTNSNAIFSEKEDLIEQHLENIHFQHPLLSESSVRRNICNVQASTAATSSSSKVSSSHKNKPEFQETRTSPVESVSSSPLRTSDKKHLDRHRTNSYAVAEIVHSQESVKTGASCSKEKYGFECGSDHTKPHVSGCSNRVMHQDALEDGDLDKQNILTNGVFNNRSSGLGIRNDQGQPNSLVEQKVNSHVLPIHGSGDFRRPTPDQNGKTLPQYNSNQSDQAKLSSGKHPTQVRPDKGNVEYIDLKTNPSTVAGSKLLPGLNNKVNGNASNKSKQSVVENMKHAAIHVDASTPINASALLKEARDLKHLSDRLKGKGDDLESANICFEACLKFLHVASLKEAAGVDSSKQGDPINTMTLYSDTGNLCGFCAREFERLKKMANAALAYKCVEVAYMKAAFYKHPGAIKDSHALQAASVIAPPAESPSSSASDVDNLNNPSTIAKIVSTRGLCTSQIAKNPISRSNHHLMGLLAYSFSYDPFCLLDKVEDTNYAFEGTRKSQSAFFSYLSGIEKDQADGIALLTEVLNFSFHNVKGLLQLIRHSLECINHERFK.

Positions 174-196 (YCQRTSSENDSNHSQQLLNSGPE) are enriched in polar residues. Disordered stretches follow at residues 174–198 (YCQR…PEQK), 449–497 (SSLD…CAKD), 555–574 (KPNY…YVLD), and 582–616 (LHTE…DHKI). The segment covering 454–465 (GFSHKTKSDKCN) has biased composition (basic and acidic residues). Residues 467 to 476 (QPVTTSSQLQ) are compositionally biased toward polar residues. Composition is skewed to basic and acidic residues over residues 479-497 (PAKK…CAKD) and 556-574 (PNYD…YVLD). Residues 645 to 698 (SEPVDQWVCCDKCETWRLLPYGMNSDTLPKKWRCSMQSWLPGMNNCKLSEGETT) form a CW-type zinc finger. Positions 654, 657, 678, and 690 each coordinate Zn(2+). The span at 768-780 (KQKRIESSDKGEK) shows a compositional bias: basic and acidic residues. Disordered stretches follow at residues 768–893 (KQKR…RDLF), 1003–1050 (STAA…LDRH), and 1149–1194 (LPIH…VRPD). Residues 781–790 (STVTISSGQT) show a composition bias toward polar residues. Residues 874–893 (NSDRGARASDAGKSDPRDLF) are compositionally biased toward basic and acidic residues. Over residues 1003–1016 (STAATSSSSKVSSS) the composition is skewed to low complexity. Composition is skewed to polar residues over residues 1026–1040 (TRTS…SPLR) and 1162–1182 (PDQN…QAKL).

Highly expressed in young panicles. Expressed at low levels in leaf sheaths, nodes, internodes and axillary buds.

It is found in the nucleus. Functionally, binds to histones H3K4me1, H3K4me2 and H3K4me3 in GST pull-down assay. May facilitate the recruitment of effectors to mediate gene expression. This is Cysteine-tryptophan domain-containing zinc finger protein 5 from Oryza sativa subsp. japonica (Rice).